The sequence spans 455 residues: Hexokinase-2 (455 aa).

Positions 3–445 constitute a Hexokinase domain; the sequence is ANFQQAVKKL…SGIGAALCAL (443 aa). The segment at 57-195 is hexokinase small subdomain; sequence TGAETGDFLA…NLPIRIEAVI (139 aa). Residue 68-73 coordinates ATP; the sequence is DFGGTN. Residues 144 to 145, 161 to 162, and 196 to 197 contribute to the substrate site; these read SY, TK, and ND. The hexokinase large subdomain stretch occupies residues 196 to 434; it reads NDTVGTLVTR…KLISIGIAKD (239 aa). Thr-222 serves as a coordination point for ATP. Positions 225, 252, and 283 each coordinate substrate. Residues 288 to 289, 325 to 329, and 400 to 404 contribute to the ATP site; these read GM, TSVLS, and SLVEH.

Belongs to the hexokinase family. Monomer.

The enzyme catalyses a D-hexose + ATP = a D-hexose 6-phosphate + ADP + H(+). It catalyses the reaction D-mannose + ATP = D-mannose 6-phosphate + ADP + H(+). It carries out the reaction D-fructose + ATP = D-fructose 6-phosphate + ADP + H(+). The catalysed reaction is D-glucose + ATP = D-glucose 6-phosphate + ADP + H(+). It participates in carbohydrate metabolism; hexose metabolism. It functions in the pathway carbohydrate degradation; glycolysis; D-glyceraldehyde 3-phosphate and glycerone phosphate from D-glucose: step 1/4. Catalyzes the phosphorylation of hexose (six-carbon sugars) to hexose 6-phosphate. Phosphorylates D-glucose, D-fructose and D-mannose. Compared to hxk1, has a much higher affinity for D-glucose. Constitutes the initial enzyme of glycolysis by catalyzing the phosphorylation of glucose to D-glucose 6-phosphate. The polypeptide is Hexokinase-2 (Schizosaccharomyces pombe (strain 972 / ATCC 24843) (Fission yeast)).